The sequence spans 128 residues: Sulfurtransferase TusD (128 aa).

The active-site Cysteine persulfide intermediate is cysteine 78.

The protein belongs to the DsrE/TusD family. Heterohexamer, formed by a dimer of trimers. The hexameric TusBCD complex contains 2 copies each of TusB, TusC and TusD. The TusBCD complex interacts with TusE.

The protein localises to the cytoplasm. In terms of biological role, part of a sulfur-relay system required for 2-thiolation of 5-methylaminomethyl-2-thiouridine (mnm(5)s(2)U) at tRNA wobble positions. Accepts sulfur from TusA and transfers it in turn to TusE. In Cronobacter sakazakii (strain ATCC BAA-894) (Enterobacter sakazakii), this protein is Sulfurtransferase TusD.